Reading from the N-terminus, the 623-residue chain is uncharacterized protein (623 aa).

The next 5 helical transmembrane spans lie at 242–262, 288–308, 318–338, 361–381, and 387–407; these read IALA…ITWL, IVSP…LDIF, VSMW…IALF, VINL…LLGV, and FNVS…ALAV.

Belongs to the MscS (TC 1.A.23) family.

The protein localises to the cell membrane. This is an uncharacterized protein from Helicobacter pylori (strain J99 / ATCC 700824) (Campylobacter pylori J99).